The chain runs to 778 residues: DEK domain-containing chromatin-associated protein 4 (778 aa).

Disordered regions lie at residues 1–334 (MGEE…RPVR) and 475–689 (LVNE…PSDE). Positions 14 to 26 (ANGTSSLQKTSDA) are enriched in polar residues. 4 stretches are compositionally biased toward basic and acidic residues: residues 40-95 (EVQE…PEAD), 121-153 (AVMK…KLEG), 165-185 (EEKL…KVEN), and 209-243 (TNKG…TESK). Positions 191-300 (KEEALKEKNE…KEDIKKSNKR (110 aa)) form a coiled coil. Over residues 244 to 286 (DENEDKEEEKEDEKEESMDDKEDEKEESNDDDKEDEKEESNDD) the composition is skewed to acidic residues. 2 stretches are compositionally biased toward basic and acidic residues: residues 287–296 (KEDKKEDIKK) and 303–323 (GKTE…DIEP). Residues 289–296 (DKKEDIKK) carry the Nuclear localization signal 1 motif. The Nuclear localization signal 2 motif lies at 489–496 (PKKSSPAA). The span at 491–502 (KSSPAAGSSSSK) shows a compositional bias: low complexity. The stretch at 526–587 (DDESEEEKED…EESEEETKKK (62 aa)) forms a coiled coil. Composition is skewed to acidic residues over residues 527–553 (DESE…EENE) and 560–582 (SEDE…ESEE). The Nuclear localization signal 3 signature appears at 618–625 (PKKATQKR). Positions 621 to 631 (ATQKRSAGKRK) are enriched in basic residues. The span at 678-689 (KGKDKNKEPSDE) shows a compositional bias: basic and acidic residues. The DEK-C domain occupies 685–740 (EPSDEELKTAIIDILKGVDFNTATFTDILKRLDAKFNISLASKKSSIKRMIQDELT). 2 consecutive DNA-binding regions follow at residues 703–717 (DFNT…KRLD) and 732–736 (KRMIQ). Residues 732-766 (KRMIQDELTKLADEAEDEEGEEEDAEHEEEEEKEK) adopt a coiled-coil conformation. Residues 741–778 (KLADEAEDEEGEEEDAEHEEEEEKEKAKGSGGGEEVKA) are disordered. Acidic residues predominate over residues 745-763 (EAEDEEGEEEDAEHEEEEE). Residues 764 to 778 (KEKAKGSGGGEEVKA) are compositionally biased toward basic and acidic residues.

Interacts with DEK3.

It localises to the nucleus. The protein localises to the nucleolus. Chromatin-associated protein which contributes to the modulation of chromatin structure (such as super-helical structure of DNA) and function. Binds to chromatin of protein-coding genes throughout the genome to regulate nucleosome occupancy and chromatin accessibility, and to modulate the expression of target genes. The polypeptide is DEK domain-containing chromatin-associated protein 4 (Arabidopsis thaliana (Mouse-ear cress)).